The chain runs to 926 residues: Protein Niban 1 (926 aa).

Glycine 2 is lipidated: N-myristoyl glycine. Serine 578, serine 581, serine 595, serine 601, and serine 640 each carry phosphoserine. Disordered regions lie at residues 604-699 (LPGA…VPGS) and 719-889 (VEND…EQVN). Residues 661 to 672 (VENTAGPLSSHL) are compositionally biased toward polar residues. Position 699 is a phosphoserine (serine 699). Basic and acidic residues predominate over residues 733–745 (NIKEEESKIHPEA). Position 755 is a phosphoserine (serine 755). The segment covering 756 to 767 (CEEREVREKEAQ) has biased composition (basic and acidic residues). The span at 784-797 (GRGSTSQSTSGGLT) shows a compositional bias: low complexity. A compositionally biased stretch (polar residues) spans 840 to 854 (VTVTPQEDATLSSNP). A Phosphoserine modification is found at serine 923.

It belongs to the Niban family.

It localises to the cytoplasm. It is found in the membrane. Its function is as follows. Regulates phosphorylation of a number of proteins involved in translation regulation including EIF2A, EIF4EBP1 and RPS6KB1. May be involved in the endoplasmic reticulum stress response. The chain is Protein Niban 1 from Mus musculus (Mouse).